The chain runs to 115 residues: U3-lycotoxin-Ls1k (115 aa).

Residues 1–20 form the signal peptide; it reads MKSVLLFGVLLVTLFSYSSA. Residues 21 to 44 constitute a propeptide that is removed on maturation; the sequence is EMLDDFDQADEDELLSLIEKEEAR. Cystine bridges form between Cys-48/Cys-63, Cys-55/Cys-72, Cys-62/Cys-87, and Cys-74/Cys-85.

Belongs to the neurotoxin 19 (CSTX) family. 01 subfamily. In terms of tissue distribution, expressed by the venom gland.

It localises to the secreted. This Lycosa singoriensis (Wolf spider) protein is U3-lycotoxin-Ls1k.